A 147-amino-acid chain; its full sequence is Interleukin-4 (147 aa).

The N-terminal stretch at 1-24 (MGLPAQLPVTLLCLLAGTAHFIQG) is a signal peptide. The cysteines at positions 48 and 88 are disulfide-linked. A glycan (N-linked (GlcNAc...) asparagine) is linked at N62.

This sequence belongs to the IL-4/IL-13 family.

It localises to the secreted. Its function is as follows. Participates in at least several B-cell activation processes as well as of other cell types. It is a costimulator of DNA-synthesis. It induces the expression of class II MHC molecules on resting B-cells. It enhances both secretion and cell surface expression of IgE and IgG1. It also regulates the expression of the low affinity Fc receptor for IgE (CD23) on both lymphocytes and monocytes. Positively regulates IL31RA expression in macrophages. Stimulates autophagy in dendritic cells by interfering with mTORC1 signaling and through the induction of RUFY4. This is Interleukin-4 (IL4) from Oryctolagus cuniculus (Rabbit).